Reading from the N-terminus, the 62-residue chain is Large ribosomal subunit protein uL29 (62 aa).

This sequence belongs to the universal ribosomal protein uL29 family.

The chain is Large ribosomal subunit protein uL29 from Cytophaga hutchinsonii (strain ATCC 33406 / DSM 1761 / CIP 103989 / NBRC 15051 / NCIMB 9469 / D465).